We begin with the raw amino-acid sequence, 76 residues long: Cytochrome c oxidase subunit 6C-1 (76 aa).

Residues 2 to 10 (SLAKPAMRG) are Mitochondrial matrix-facing. The chain crosses the membrane as a helical span at residues 11–51 (LLGKRLRFHLPIAFTLSLVAALGFKYGVTEPRKQAYADFYK). Topologically, residues 52–76 (QYDAVKDFNAMREAGIFESVRPSGE) are mitochondrial intermembrane.

The protein belongs to the cytochrome c oxidase subunit 6c family. Component of the cytochrome c oxidase (complex IV, CIV), a multisubunit enzyme composed of 14 subunits. The complex is composed of a catalytic core of 3 subunits MT-CO1, MT-CO2 and MT-CO3, encoded in the mitochondrial DNA, and 11 supernumerary subunits COX4I, COX5A, COX5B, COX6A, COX6B, COX6C, COX7A, COX7B, COX7C, COX8 and NDUFA4, which are encoded in the nuclear genome. The complex exists as a monomer or a dimer and forms supercomplexes (SCs) in the inner mitochondrial membrane with NADH-ubiquinone oxidoreductase (complex I, CI) and ubiquinol-cytochrome c oxidoreductase (cytochrome b-c1 complex, complex III, CIII), resulting in different assemblies (supercomplex SCI(1)III(2)IV(1) and megacomplex MCI(2)III(2)IV(2)).

The protein resides in the mitochondrion inner membrane. It functions in the pathway energy metabolism; oxidative phosphorylation. Functionally, component of the cytochrome c oxidase, the last enzyme in the mitochondrial electron transport chain which drives oxidative phosphorylation. The respiratory chain contains 3 multisubunit complexes succinate dehydrogenase (complex II, CII), ubiquinol-cytochrome c oxidoreductase (cytochrome b-c1 complex, complex III, CIII) and cytochrome c oxidase (complex IV, CIV), that cooperate to transfer electrons derived from NADH and succinate to molecular oxygen, creating an electrochemical gradient over the inner membrane that drives transmembrane transport and the ATP synthase. Cytochrome c oxidase is the component of the respiratory chain that catalyzes the reduction of oxygen to water. Electrons originating from reduced cytochrome c in the intermembrane space (IMS) are transferred via the dinuclear copper A center (CU(A)) of subunit 2 and heme A of subunit 1 to the active site in subunit 1, a binuclear center (BNC) formed by heme A3 and copper B (CU(B)). The BNC reduces molecular oxygen to 2 water molecules using 4 electrons from cytochrome c in the IMS and 4 protons from the mitochondrial matrix. The protein is Cytochrome c oxidase subunit 6C-1 of Thunnus obesus (Bigeye tuna).